Here is a 268-residue protein sequence, read N- to C-terminus: Mitochondrial distribution and morphology protein 12 (268 aa).

Positions 1–266 constitute an SMP-LTD domain; that stretch reads MSIDLEWCKL…FPNFHTIVMA (266 aa). The disordered stretch occupies residues 66 to 136; sequence EDDEEGSDRG…PPPAENPHPN (71 aa). Over residues 102–111 the composition is skewed to polar residues; sequence PATNVTSSLD. Basic and acidic residues predominate over residues 112 to 121; the sequence is TRSDQPDDQK.

Belongs to the MDM12 family. Component of the ER-mitochondria encounter structure (ERMES) or MDM complex, composed of MMM1, MDM10, MDM12 and MDM34. An MMM1 homodimer associates with one molecule of MDM12 on each side in a pairwise head-to-tail manner, and the SMP-LTD domains of MMM1 and MDM12 generate a continuous hydrophobic tunnel for phospholipid trafficking.

Its subcellular location is the mitochondrion outer membrane. The protein localises to the endoplasmic reticulum membrane. In terms of biological role, component of the ERMES/MDM complex, which serves as a molecular tether to connect the endoplasmic reticulum (ER) and mitochondria. Components of this complex are involved in the control of mitochondrial shape and protein biogenesis, and function in nonvesicular lipid trafficking between the ER and mitochondria. MDM12 is required for the interaction of the ER-resident membrane protein MMM1 and the outer mitochondrial membrane-resident beta-barrel protein MDM10. The MDM12-MMM1 subcomplex functions in the major beta-barrel assembly pathway that is responsible for biogenesis of all mitochondrial outer membrane beta-barrel proteins, and acts in a late step after the SAM complex. The MDM10-MDM12-MMM1 subcomplex further acts in the TOM40-specific pathway after the action of the MDM12-MMM1 complex. Essential for establishing and maintaining the structure of mitochondria and maintenance of mtDNA nucleoids. The chain is Mitochondrial distribution and morphology protein 12 from Laccaria bicolor (strain S238N-H82 / ATCC MYA-4686) (Bicoloured deceiver).